The primary structure comprises 486 residues: Cobyric acid synthase (486 aa).

The GATase cobBQ-type domain maps to Arg-251–Ala-439. Cys-333 serves as the catalytic Nucleophile. His-431 is an active-site residue.

Belongs to the CobB/CobQ family. CobQ subfamily.

It functions in the pathway cofactor biosynthesis; adenosylcobalamin biosynthesis. Catalyzes amidations at positions B, D, E, and G on adenosylcobyrinic A,C-diamide. NH(2) groups are provided by glutamine, and one molecule of ATP is hydrogenolyzed for each amidation. The chain is Cobyric acid synthase from Caulobacter sp. (strain K31).